The sequence spans 205 residues: Large ribosomal subunit protein uL4 (205 aa).

Positions 44 to 77 (KRQGTSKVKNRSAVRGGGKKPWRQKGTGRARQGS) are disordered. A compositionally biased stretch (basic residues) spans 51–71 (VKNRSAVRGGGKKPWRQKGTG).

It belongs to the universal ribosomal protein uL4 family. In terms of assembly, part of the 50S ribosomal subunit.

Its function is as follows. One of the primary rRNA binding proteins, this protein initially binds near the 5'-end of the 23S rRNA. It is important during the early stages of 50S assembly. It makes multiple contacts with different domains of the 23S rRNA in the assembled 50S subunit and ribosome. In terms of biological role, forms part of the polypeptide exit tunnel. The chain is Large ribosomal subunit protein uL4 from Lactobacillus delbrueckii subsp. bulgaricus (strain ATCC 11842 / DSM 20081 / BCRC 10696 / JCM 1002 / NBRC 13953 / NCIMB 11778 / NCTC 12712 / WDCM 00102 / Lb 14).